A 492-amino-acid polypeptide reads, in one-letter code: Bifunctional purine biosynthesis protein PurH (492 aa).

Positions 1–144 (MKKAILSVSN…KNYKHVTTIV (144 aa)) constitute an MGS-like domain.

It belongs to the PurH family.

It carries out the reaction (6R)-10-formyltetrahydrofolate + 5-amino-1-(5-phospho-beta-D-ribosyl)imidazole-4-carboxamide = 5-formamido-1-(5-phospho-D-ribosyl)imidazole-4-carboxamide + (6S)-5,6,7,8-tetrahydrofolate. It catalyses the reaction IMP + H2O = 5-formamido-1-(5-phospho-D-ribosyl)imidazole-4-carboxamide. It participates in purine metabolism; IMP biosynthesis via de novo pathway; 5-formamido-1-(5-phospho-D-ribosyl)imidazole-4-carboxamide from 5-amino-1-(5-phospho-D-ribosyl)imidazole-4-carboxamide (10-formyl THF route): step 1/1. The protein operates within purine metabolism; IMP biosynthesis via de novo pathway; IMP from 5-formamido-1-(5-phospho-D-ribosyl)imidazole-4-carboxamide: step 1/1. The chain is Bifunctional purine biosynthesis protein PurH from Staphylococcus aureus (strain Newman).